Reading from the N-terminus, the 534-residue chain is Corneodesmosin (534 aa).

A signal peptide spans Met-1–Ala-32. Disordered regions lie at residues Phe-38 to Ser-252 and Cys-396 to Gly-497. 5 stretches are compositionally biased toward low complexity: residues Gly-64 to Ser-82, Gly-107 to Ala-185, Ser-200 to Pro-236, Ser-397 to Ser-415, and Pro-431 to Gly-446. Residues Gly-454–Leu-472 show a composition bias toward polar residues.

The protein localises to the secreted. Functionally, important for the epidermal barrier integrity. The sequence is that of Corneodesmosin (CDSN) from Macaca mulatta (Rhesus macaque).